The chain runs to 378 residues: Dual-specificity RNA methyltransferase RlmN 2 (378 aa).

The active-site Proton acceptor is glutamate 113. Residues 119–355 form the Radical SAM core domain; that stretch reads TEDRRTLCVS…AAYIRRNRGR (237 aa). Cysteine 126 and cysteine 361 are joined by a disulfide. 3 residues coordinate [4Fe-4S] cluster: cysteine 133, cysteine 137, and cysteine 140. S-adenosyl-L-methionine-binding positions include 188–189, serine 220, 242–244, and asparagine 318; these read GE and SLN. Residue cysteine 361 is the S-methylcysteine intermediate of the active site.

The protein belongs to the radical SAM superfamily. RlmN family. [4Fe-4S] cluster is required as a cofactor.

It is found in the cytoplasm. The catalysed reaction is adenosine(2503) in 23S rRNA + 2 reduced [2Fe-2S]-[ferredoxin] + 2 S-adenosyl-L-methionine = 2-methyladenosine(2503) in 23S rRNA + 5'-deoxyadenosine + L-methionine + 2 oxidized [2Fe-2S]-[ferredoxin] + S-adenosyl-L-homocysteine. The enzyme catalyses adenosine(37) in tRNA + 2 reduced [2Fe-2S]-[ferredoxin] + 2 S-adenosyl-L-methionine = 2-methyladenosine(37) in tRNA + 5'-deoxyadenosine + L-methionine + 2 oxidized [2Fe-2S]-[ferredoxin] + S-adenosyl-L-homocysteine. Its function is as follows. Specifically methylates position 2 of adenine 2503 in 23S rRNA and position 2 of adenine 37 in tRNAs. m2A2503 modification seems to play a crucial role in the proofreading step occurring at the peptidyl transferase center and thus would serve to optimize ribosomal fidelity. This Myxococcus xanthus (strain DK1622) protein is Dual-specificity RNA methyltransferase RlmN 2.